The chain runs to 360 residues: MTKKIIFTGGGTAGHVTLNLILIPKFIKDGWEVHYIGDDKGIEHQEIKKSGLDVTFHAIATGKLRRYFSWQNLLDIFKVGFGVMQSLFIIARLRPKALFSKGGFVSVPPVIAARLLGVPAFIHESDLSMGLANRIAYRFATTMYTTFEQEQTLAKLKHVGAVTKVTGPGSRSVTSKQLEAVLEYFDPNLKTLLFIGGSAGARVFNRFITDHPELKEDFNIINISGDPSLNELSWHLYRVDYVTDLYQPLMEMADLVVTRGGSNTLFELLAMRKLQLIIPLGKEASRGDQLENAHYFTTRGYAEQLLEQELTLPHFQEKVREVFAKQSDYLSAMKSSSELQSPESFYQLLSADISSATKEN.

Residues 12–14, serine 198, and glutamine 289 each bind UDP-N-acetyl-alpha-D-glucosamine; that span reads TAG.

Belongs to the glycosyltransferase 28 family. MurG subfamily.

The protein resides in the cell membrane. It catalyses the reaction Mur2Ac(oyl-L-Ala-gamma-D-Glu-L-Lys-D-Ala-D-Ala)-di-trans,octa-cis-undecaprenyl diphosphate + UDP-N-acetyl-alpha-D-glucosamine = beta-D-GlcNAc-(1-&gt;4)-Mur2Ac(oyl-L-Ala-gamma-D-Glu-L-Lys-D-Ala-D-Ala)-di-trans,octa-cis-undecaprenyl diphosphate + UDP + H(+). It functions in the pathway cell wall biogenesis; peptidoglycan biosynthesis. Functionally, cell wall formation. Catalyzes the transfer of a GlcNAc subunit on undecaprenyl-pyrophosphoryl-MurNAc-pentapeptide (lipid intermediate I) to form undecaprenyl-pyrophosphoryl-MurNAc-(pentapeptide)GlcNAc (lipid intermediate II). This chain is UDP-N-acetylglucosamine--N-acetylmuramyl-(pentapeptide) pyrophosphoryl-undecaprenol N-acetylglucosamine transferase, found in Streptococcus equi subsp. equi (strain 4047).